Here is a 78-residue protein sequence, read N- to C-terminus: ATP synthase subunit c (78 aa).

2 helical membrane-spanning segments follow: residues 9–29 (AFIG…GQGW) and 56–76 (AAVT…LVFV).

It belongs to the ATPase C chain family. F-type ATPases have 2 components, F(1) - the catalytic core - and F(0) - the membrane proton channel. F(1) has five subunits: alpha(3), beta(3), gamma(1), delta(1), epsilon(1). F(0) has three main subunits: a(1), b(2) and c(10-14). The alpha and beta chains form an alternating ring which encloses part of the gamma chain. F(1) is attached to F(0) by a central stalk formed by the gamma and epsilon chains, while a peripheral stalk is formed by the delta and b chains.

It localises to the cell membrane. In terms of biological role, f(1)F(0) ATP synthase produces ATP from ADP in the presence of a proton or sodium gradient. F-type ATPases consist of two structural domains, F(1) containing the extramembraneous catalytic core and F(0) containing the membrane proton channel, linked together by a central stalk and a peripheral stalk. During catalysis, ATP synthesis in the catalytic domain of F(1) is coupled via a rotary mechanism of the central stalk subunits to proton translocation. Functionally, key component of the F(0) channel; it plays a direct role in translocation across the membrane. A homomeric c-ring of between 10-14 subunits forms the central stalk rotor element with the F(1) delta and epsilon subunits. This chain is ATP synthase subunit c, found in Malacoplasma penetrans (strain HF-2) (Mycoplasma penetrans).